An 810-amino-acid polypeptide reads, in one-letter code: Phenylalanine--tRNA ligase beta subunit (810 aa).

One can recognise a tRNA-binding domain in the interval 39 to 150; it reads RTWANGVVVG…ENLPLGSDVR (112 aa). A B5 domain is found at 411 to 495; sequence TWSRSIFLRL…RLYGYDNFCD (85 aa). Mg(2+)-binding residues include Asp-473, Asp-479, Glu-482, and Glu-483. The region spanning 716–809 is the FDX-ACB domain; the sequence is STYPASDRDI…LVEKFGVNLR (94 aa).

This sequence belongs to the phenylalanyl-tRNA synthetase beta subunit family. Type 1 subfamily. Tetramer of two alpha and two beta subunits. The cofactor is Mg(2+).

The protein resides in the cytoplasm. It catalyses the reaction tRNA(Phe) + L-phenylalanine + ATP = L-phenylalanyl-tRNA(Phe) + AMP + diphosphate + H(+). The chain is Phenylalanine--tRNA ligase beta subunit from Trichormus variabilis (strain ATCC 29413 / PCC 7937) (Anabaena variabilis).